Consider the following 424-residue polypeptide: Serine hydroxymethyltransferase 2 (424 aa).

(6S)-5,6,7,8-tetrahydrofolate is bound by residues L125 and G129 to L131. K234 is subject to N6-(pyridoxal phosphate)lysine. E250 provides a ligand contact to (6S)-5,6,7,8-tetrahydrofolate.

Belongs to the SHMT family. As to quaternary structure, homodimer. The cofactor is pyridoxal 5'-phosphate.

Its subcellular location is the cytoplasm. The catalysed reaction is (6R)-5,10-methylene-5,6,7,8-tetrahydrofolate + glycine + H2O = (6S)-5,6,7,8-tetrahydrofolate + L-serine. It participates in one-carbon metabolism; tetrahydrofolate interconversion. The protein operates within amino-acid biosynthesis; glycine biosynthesis; glycine from L-serine: step 1/1. In terms of biological role, catalyzes the reversible interconversion of serine and glycine with tetrahydrofolate (THF) serving as the one-carbon carrier. This reaction serves as the major source of one-carbon groups required for the biosynthesis of purines, thymidylate, methionine, and other important biomolecules. Also exhibits THF-independent aldolase activity toward beta-hydroxyamino acids, producing glycine and aldehydes, via a retro-aldol mechanism. This Ralstonia nicotianae (strain ATCC BAA-1114 / GMI1000) (Ralstonia solanacearum) protein is Serine hydroxymethyltransferase 2.